Here is a 592-residue protein sequence, read N- to C-terminus: NADH-quinone oxidoreductase subunit C/D (592 aa).

The tract at residues 1–183 (MSAAQSPTAQ…DPYTLTVEGQ (183 aa)) is NADH dehydrogenase I subunit C. The segment at 207–592 (DYMFLNLGPN…IDFVMADVDR (386 aa)) is NADH dehydrogenase I subunit D.

In the N-terminal section; belongs to the complex I 30 kDa subunit family. This sequence in the C-terminal section; belongs to the complex I 49 kDa subunit family. NDH-1 is composed of 13 different subunits. Subunits NuoB, CD, E, F, and G constitute the peripheral sector of the complex.

It localises to the cell inner membrane. It catalyses the reaction a quinone + NADH + 5 H(+)(in) = a quinol + NAD(+) + 4 H(+)(out). Its function is as follows. NDH-1 shuttles electrons from NADH, via FMN and iron-sulfur (Fe-S) centers, to quinones in the respiratory chain. The immediate electron acceptor for the enzyme in this species is believed to be ubiquinone. Couples the redox reaction to proton translocation (for every two electrons transferred, four hydrogen ions are translocated across the cytoplasmic membrane), and thus conserves the redox energy in a proton gradient. The polypeptide is NADH-quinone oxidoreductase subunit C/D (Chromohalobacter salexigens (strain ATCC BAA-138 / DSM 3043 / CIP 106854 / NCIMB 13768 / 1H11)).